We begin with the raw amino-acid sequence, 554 residues long: Putative mediator of RNA polymerase II transcription subunit 29 (554 aa).

4 disordered regions span residues 118 to 301 (DNKA…NTEA), 330 to 381 (QQQQ…PLPQ), 398 to 428 (LENQ…LQLQ), and 483 to 524 (NTNL…DDNT). A compositionally biased stretch (low complexity) spans 122–210 (NTNNNNNNNN…NNSINNNSNN (89 aa)). Residues 167–194 (NNNNNNNYNNNNNNNNNNNNNNNNNNNN) adopt a coiled-coil conformation. Residues 211–225 (KVGSNDNPSTAPITE) show a composition bias toward polar residues. The span at 226–264 (NNTENNAGNTNNTNNNNNNNNNNNNNNNNNNNNNNNNTN) shows a compositional bias: low complexity. Residues 265 to 300 (QVAESSNISSNTTPPETTNIVNDPNSVSGGNLTNTE) show a composition bias toward polar residues. Low complexity-rich tracts occupy residues 330–374 (QQQQ…QQPQ), 419–428 (QQQQEQLQLQ), and 483–517 (NTNL…PEIN). The stretch at 419–486 (QQQQEQLQLQ…SLENQINTNL (68 aa)) forms a coiled coil.

The protein belongs to the Mediator complex subunit 29 family. In terms of assembly, component of the Mediator complex.

The protein localises to the nucleus. In terms of biological role, component of the Mediator complex, a coactivator involved in the regulated transcription of nearly all RNA polymerase II-dependent genes. Mediator functions as a bridge to convey information from gene-specific regulatory proteins to the basal RNA polymerase II transcription machinery. Mediator is recruited to promoters by direct interactions with regulatory proteins and serves as a scaffold for the assembly of a functional preinitiation complex with RNA polymerase II and the general transcription factors. This is Putative mediator of RNA polymerase II transcription subunit 29 (med29) from Dictyostelium discoideum (Social amoeba).